Here is a 1616-residue protein sequence, read N- to C-terminus: Vitellogenin-1 (1616 aa).

The signal sequence occupies residues 1 to 19; that stretch reads MRSIIIASIVALAIAFSPA. Residues 24-689 enclose the Vitellogenin domain; the sequence is FEPKIDYHYK…EKNSFLLKDL (666 aa). Residue Asn1270 is glycosylated (N-linked (GlcNAc...) asparagine). The 170-residue stretch at 1310–1479 folds into the VWFD domain; sequence SVCKVQKNQI…SYLLKNEECE (170 aa). Intrachain disulfides connect Cys1312–Cys1442 and Cys1334–Cys1478. The span at 1505–1514 shows a compositional bias: acidic residues; it reads SFEETYDYEQ. The segment at 1505 to 1531 is disordered; sequence SFEETYDYEQENTNKKQKNQRSQKKSD.

As to expression, expressed in the intestine of adult hermaphrodites.

The protein localises to the secreted. Functionally, precursor of the egg-yolk proteins that are sources of nutrients during embryonic development. Together with other vitellogenins, may play a role in modulating life-span, acting via induction of autophagy and lysosomal lipolysis. In Caenorhabditis elegans, this protein is Vitellogenin-1 (vit-1).